Reading from the N-terminus, the 157-residue chain is Large ribosomal subunit protein uL13m (157 aa).

The transit peptide at 1-29 (MSTLNGQTALAYAKVWHHVSAKNVPLGRL) directs the protein to the mitochondrion.

It belongs to the universal ribosomal protein uL13 family. Component of the mitochondrial large ribosomal subunit (mt-LSU). Mature yeast 74S mitochondrial ribosomes consist of a small (37S) and a large (54S) subunit. The 37S small subunit contains a 15S ribosomal RNA (15S mt-rRNA) and at least 32 different proteins. The 54S large subunit contains a 21S rRNA (21S mt-rRNA) and at least 45 different proteins.

It localises to the mitochondrion. Its function is as follows. Component of the mitochondrial ribosome (mitoribosome), a dedicated translation machinery responsible for the synthesis of mitochondrial genome-encoded proteins, including at least some of the essential transmembrane subunits of the mitochondrial respiratory chain. The mitoribosomes are attached to the mitochondrial inner membrane and translation products are cotranslationally integrated into the membrane. In Schizosaccharomyces pombe (strain 972 / ATCC 24843) (Fission yeast), this protein is Large ribosomal subunit protein uL13m.